Reading from the N-terminus, the 188-residue chain is uncharacterized protein (188 aa).

Residues 62-77 carry the L5-specific motif motif; it reads ITGEKPLIKLNESTEK.

It localises to the mitochondrion. This is an uncharacterized protein from Dictyostelium discoideum (Social amoeba).